A 750-amino-acid polypeptide reads, in one-letter code: von Willebrand factor A domain-containing protein DDB_G0292188 (750 aa).

The VWFA domain occupies 17 to 249 (EIKTVFNSDS…IKDDLLLDVV (233 aa)). Low complexity-rich tracts occupy residues 586 to 595 (SINDNNNSFN) and 603 to 645 (PFFE…SSAS). Positions 586-657 (SINDNNNSFN…PPPSQMLNEQ (72 aa)) are disordered.

The protein is von Willebrand factor A domain-containing protein DDB_G0292188 of Dictyostelium discoideum (Social amoeba).